We begin with the raw amino-acid sequence, 100 residues long: Urease subunit gamma (100 aa).

This sequence belongs to the urease gamma subunit family. In terms of assembly, heterotrimer of UreA (gamma), UreB (beta) and UreC (alpha) subunits. Three heterotrimers associate to form the active enzyme.

The protein resides in the cytoplasm. The catalysed reaction is urea + 2 H2O + H(+) = hydrogencarbonate + 2 NH4(+). Its pathway is nitrogen metabolism; urea degradation; CO(2) and NH(3) from urea (urease route): step 1/1. The chain is Urease subunit gamma from Blochmanniella floridana.